We begin with the raw amino-acid sequence, 267 residues long: MATKIFVLLALLALSVSTTTAVIIPQCSLAPNAIISQFLPPLTPVGFEHPALQAYRLQQALANSILQQPFAQLQQQSSAHLTVQTIAAQQQQQQFLPALSQLALANPVAYLQQQLLASNPLALVNNAAYQQQQLQQVLPMISQVAMANPAAYLQQQQLAYNPLVAANAAAYLRQQQLQQILPALSQLALVNPAAYLHTQLLPFNQLAVTNTAAYLQQQQLLRVNPVVAANPLCAAFLQPRQLLPFNQISLMNPAFSWQQPIVGSAIV.

The first 21 residues, methionine 1 to alanine 21, serve as a signal peptide directing secretion.

This sequence belongs to the zein family.

In terms of biological role, major seed storage prolamin. The polypeptide is Kafirin PSKR2 (Sorghum bicolor (Sorghum)).